The chain runs to 211 residues: N-(5'-phosphoribosyl)anthranilate isomerase (211 aa).

Belongs to the TrpF family.

The enzyme catalyses N-(5-phospho-beta-D-ribosyl)anthranilate = 1-(2-carboxyphenylamino)-1-deoxy-D-ribulose 5-phosphate. The protein operates within amino-acid biosynthesis; L-tryptophan biosynthesis; L-tryptophan from chorismate: step 3/5. This Zymomonas mobilis subsp. pomaceae (strain ATCC 29192 / DSM 22645 / JCM 10191 / CCUG 17912 / NBRC 13757 / NCIMB 11200 / NRRL B-4491 / Barker I) protein is N-(5'-phosphoribosyl)anthranilate isomerase.